The primary structure comprises 63 residues: Cecropin-A (63 aa).

Residues 1–22 (MNFVRILSFVFALVLALGAVSA) form the signal peptide. A propeptide spanning residues 23 to 26 (APEP) is cleaved from the precursor. L61 bears the Leucine amide mark.

The protein belongs to the cecropin family. In terms of tissue distribution, highest expression in fat body and hemocytes. Is also expressed in Malpighian tubules and to a much lesser extent in midgut. Not present in silk gland.

It localises to the secreted. Functionally, cecropins have lytic and antibacterial activity against several Gram-positive and Gram-negative bacteria. The sequence is that of Cecropin-A (CECA) from Bombyx mori (Silk moth).